Reading from the N-terminus, the 426-residue chain is Glutamyl-tRNA reductase (426 aa).

Residues 52–55 (TCNR), Ser-110, 115–117 (EYE), and Gln-121 contribute to the substrate site. The Nucleophile role is filled by Cys-53. 190 to 195 (GAGEMG) provides a ligand contact to NADP(+).

Belongs to the glutamyl-tRNA reductase family. In terms of assembly, homodimer.

The enzyme catalyses (S)-4-amino-5-oxopentanoate + tRNA(Glu) + NADP(+) = L-glutamyl-tRNA(Glu) + NADPH + H(+). The protein operates within porphyrin-containing compound metabolism; protoporphyrin-IX biosynthesis; 5-aminolevulinate from L-glutamyl-tRNA(Glu): step 1/2. In terms of biological role, catalyzes the NADPH-dependent reduction of glutamyl-tRNA(Glu) to glutamate 1-semialdehyde (GSA). The polypeptide is Glutamyl-tRNA reductase (Saccharolobus islandicus (strain Y.N.15.51 / Yellowstone #2) (Sulfolobus islandicus)).